We begin with the raw amino-acid sequence, 206 residues long: Peptidyl-tRNA hydrolase (206 aa).

Tyrosine 19 is a tRNA binding site. The Proton acceptor role is filled by histidine 24. Tyrosine 70, asparagine 72, and asparagine 118 together coordinate tRNA.

It belongs to the PTH family. In terms of assembly, monomer.

The protein localises to the cytoplasm. It carries out the reaction an N-acyl-L-alpha-aminoacyl-tRNA + H2O = an N-acyl-L-amino acid + a tRNA + H(+). Its function is as follows. Hydrolyzes ribosome-free peptidyl-tRNAs (with 1 or more amino acids incorporated), which drop off the ribosome during protein synthesis, or as a result of ribosome stalling. Catalyzes the release of premature peptidyl moieties from peptidyl-tRNA molecules trapped in stalled 50S ribosomal subunits, and thus maintains levels of free tRNAs and 50S ribosomes. This chain is Peptidyl-tRNA hydrolase, found in Prochlorococcus marinus (strain MIT 9313).